Consider the following 752-residue polypeptide: Primary amine oxidase (752 aa).

The signal sequence occupies residues 1–27 (MAILSPRKTALALAVALSCAWQSPAFA). Substrate contacts are provided by residues 408-419 (YLDSGDYGMGTL) and 490-495 (VGNYDY). Aspartate 410 (proton acceptor) is an active-site residue. Tyrosine 493 acts as the Schiff-base intermediate with substrate; via topaquinone in catalysis. A 2',4',5'-topaquinone modification is found at tyrosine 493. Positions 551 and 553 each coordinate Cu cation. The Ca(2+) site is built by aspartate 560, leucine 561, aspartate 562, glutamate 600, tyrosine 694, aspartate 697, glutamate 699, and aspartate 705. Aspartate 560 is a binding site for Mn(2+). Position 562 (aspartate 562) interacts with Mn(2+). Aspartate 705 lines the Mn(2+) pocket. Histidine 716 serves as a coordination point for Cu cation.

This sequence belongs to the copper/topaquinone oxidase family. In terms of assembly, homodimer. It depends on Cu cation as a cofactor. The cofactor is Ca(2+). Requires L-topaquinone as cofactor. Mn(2+) serves as cofactor. Post-translationally, topaquinone (TPQ) is generated by copper-dependent autoxidation of a specific tyrosyl residue.

Its subcellular location is the periplasm. The catalysed reaction is a primary methyl amine + O2 + H2O = an aldehyde + H2O2 + NH4(+). Active on tyramine, tryptamine, beta-phenethylamine and dopamine. This is Primary amine oxidase (maoA) from Klebsiella michiganensis (strain ATCC 8724 / DSM 4798 / JCM 20051 / NBRC 3318 / NRRL B-199 / KCTC 1686 / BUCSAV 143 / CCM 1901).